Here is a 258-residue protein sequence, read N- to C-terminus: Type III pantothenate kinase (258 aa).

6 to 13 contacts ATP; that stretch reads DVGNTNIV. Substrate is bound by residues Tyr-100 and 107–110; that span reads GADR. Asp-109 acts as the Proton acceptor in catalysis. K(+) is bound at residue Asp-129. Thr-132 lines the ATP pocket. Thr-184 lines the substrate pocket.

It belongs to the type III pantothenate kinase family. In terms of assembly, homodimer. NH4(+) is required as a cofactor. K(+) serves as cofactor.

It localises to the cytoplasm. The catalysed reaction is (R)-pantothenate + ATP = (R)-4'-phosphopantothenate + ADP + H(+). It functions in the pathway cofactor biosynthesis; coenzyme A biosynthesis; CoA from (R)-pantothenate: step 1/5. Functionally, catalyzes the phosphorylation of pantothenate (Pan), the first step in CoA biosynthesis. This chain is Type III pantothenate kinase, found in Desulfitobacterium hafniense (strain DSM 10664 / DCB-2).